The chain runs to 316 residues: Adenine deaminase (316 aa).

Residues H14, H16, and H194 each coordinate Zn(2+). The active-site Proton donor is the E197. D275 is a Zn(2+) binding site. Position 276 (D276) interacts with substrate.

Belongs to the metallo-dependent hydrolases superfamily. Adenosine and AMP deaminases family. Adenine deaminase type 2 subfamily. It depends on Zn(2+) as a cofactor.

It catalyses the reaction adenine + H2O + H(+) = hypoxanthine + NH4(+). Functionally, catalyzes the hydrolytic deamination of adenine to hypoxanthine. Plays an important role in the purine salvage pathway and in nitrogen catabolism. The sequence is that of Adenine deaminase from Pseudomonas entomophila (strain L48).